Here is a 285-residue protein sequence, read N- to C-terminus: Pantothenate synthetase (285 aa).

An ATP-binding site is contributed by 30–37 (MGFLHEGH). Residue His-37 is the Proton donor of the active site. A (R)-pantoate-binding site is contributed by Gln-61. Gln-61 is a beta-alanine binding site. Residue 147–150 (GQKD) coordinates ATP. Gln-153 is a (R)-pantoate binding site. Residues Val-176 and 184–187 (KSSR) each bind ATP.

Belongs to the pantothenate synthetase family. Homodimer.

Its subcellular location is the cytoplasm. The enzyme catalyses (R)-pantoate + beta-alanine + ATP = (R)-pantothenate + AMP + diphosphate + H(+). It functions in the pathway cofactor biosynthesis; (R)-pantothenate biosynthesis; (R)-pantothenate from (R)-pantoate and beta-alanine: step 1/1. In terms of biological role, catalyzes the condensation of pantoate with beta-alanine in an ATP-dependent reaction via a pantoyl-adenylate intermediate. The sequence is that of Pantothenate synthetase from Listeria monocytogenes serovar 1/2a (strain ATCC BAA-679 / EGD-e).